Reading from the N-terminus, the 420-residue chain is MPRKSILSVNAGSSSVKITFYSYTKTPSVIATAQVSGITAPPATFKYSVGSKQKKEELKEKISSGPDAFKLLLHRCFTDSDLKDVASADDLAYICHRVVHGGDFESPVVINEETYHQLEDLEDLAPLHNFAALEIVRLCKKELPNVQSITFFDSSFHKSLPPYVKTYPIDQETARRNKLRKYGFHGISYSFILRSVAEYLNKPVEKTSLIALHIGSGASVCAIKDGKSIDTSMGLTPLAGLPGATRSGDIDPSLVFHYTNEAGKLSPASTKEMHISTAEEILNKKSGWKVLTGTTDFSQIAVEDPPSEQHKLAFDILVDRIVGYIGNYYVKLDGQVEGIVFAGGIGEKSALLRKAVIEQTRCLGFAVDPEKNQHGPGDDETVVDITASGRSDVKRVFICQTDEQFEMAYNCTKTQGLDKQ.

A Mg(2+)-binding site is contributed by Asn-10. Lys-17 provides a ligand contact to ATP. Arg-97 is a substrate binding site. Asp-153 serves as the catalytic Proton donor/acceptor. His-213–Gly-217 contributes to the ATP binding site. Glu-403 contacts Mg(2+).

The protein belongs to the acetokinase family. It depends on Mg(2+) as a cofactor.

The catalysed reaction is acetate + ATP = acetyl phosphate + ADP. It functions in the pathway metabolic intermediate biosynthesis; acetyl-CoA biosynthesis; acetyl-CoA from acetate: step 1/2. This Emericella nidulans (strain FGSC A4 / ATCC 38163 / CBS 112.46 / NRRL 194 / M139) (Aspergillus nidulans) protein is Probable acetate kinase.